A 396-amino-acid chain; its full sequence is Acetate kinase (396 aa).

Residue Asn7 coordinates Mg(2+). Lys14 contributes to the ATP binding site. Arg89 provides a ligand contact to substrate. The active-site Proton donor/acceptor is Asp146. ATP-binding positions include 206–210, 280–282, and 328–332; these read HLGNG, DLR, and GIGEN. Residue Glu382 coordinates Mg(2+).

Belongs to the acetokinase family. As to quaternary structure, homodimer. It depends on Mg(2+) as a cofactor. Mn(2+) serves as cofactor.

It is found in the cytoplasm. The enzyme catalyses acetate + ATP = acetyl phosphate + ADP. It participates in metabolic intermediate biosynthesis; acetyl-CoA biosynthesis; acetyl-CoA from acetate: step 1/2. Its function is as follows. Catalyzes the formation of acetyl phosphate from acetate and ATP. Can also catalyze the reverse reaction. This Maridesulfovibrio salexigens (strain ATCC 14822 / DSM 2638 / NCIMB 8403 / VKM B-1763) (Desulfovibrio salexigens) protein is Acetate kinase.